The primary structure comprises 227 residues: Cleavage and polyadenylation specificity factor subunit 5 (227 aa).

Residue serine 2 is modified to N-acetylserine. The interval 2 to 147 (SVVPPNRSQT…DWVIDDCIGN (146 aa)) is necessary for RNA-binding. Residue arginine 15 is modified to Omega-N-methylarginine. N6-acetyllysine occurs at positions 23 and 29. Tyrosine 40 bears the Phosphotyrosine mark. The residue at position 56 (lysine 56) is an N6-acetyllysine. The 126-residue stretch at 76-201 (MRRTVEGVLI…KLVAAPLFEL (126 aa)) folds into the Nudix hydrolase domain. Residues 81-160 (EGVLIVHEHR…PNFEPPQYPY (80 aa)) form a necessary for interactions with PAPOLA and PABPN1 region. The tract at residues 102–104 (TFF) is interaction with RNA. The short motif at 109–130 (GELNPGEDEVEGLKRLMTEILG) is the Nudix box element.

It belongs to the Nudix hydrolase family. CPSF5 subfamily. Homodimer (via N- and C-terminus); binds RNA as homodimer. Component of the cleavage factor Im (CFIm) complex which is a heterotetramer composed of two subunits of NUDT21/CPSF5 and two subunits of CPSF6 or CPSF7 or a heterodimer of CPSF6 and CPSF7. The cleavage factor Im (CFIm) complex associates with the CPSF and CSTF complexes to promote the assembly of the core mRNA 3'-processing machinery. Interacts with CPSF6 (via the RRM domain); this interaction is direct and enhances binding to RNA. Interacts with CPSF7. Interacts with FIP1L1; this interaction occurs in a RNA sequence-specific manner. Interacts with PABPN1. Interacts (via N-terminus) with PAPOLA (via C-terminus); this interaction is direct and diminished by acetylation. Interacts with SNRNP70. Interacts with VIRMA. Post-translationally, acetylated mainly by p300/CBP, recruited to the complex by CPSF6. Acetylation decreases interaction with PAPAO. Deacetylated by the class I/II HDACs, HDAC1, HDAC3 and HDAC10, and by the class III HDACs, SIRT1 and SIRT2. In terms of tissue distribution, expressed in testis. Expressed in male germ cells (at protein level).

The protein localises to the nucleus. It localises to the cytoplasm. Functionally, component of the cleavage factor Im (CFIm) complex that functions as an activator of the pre-mRNA 3'-end cleavage and polyadenylation processing required for the maturation of pre-mRNA into functional mRNAs. CFIm contributes to the recruitment of multiprotein complexes on specific sequences on the pre-mRNA 3'-end, so called cleavage and polyadenylation signals (pA signals). Most pre-mRNAs contain multiple pA signals, resulting in alternative cleavage and polyadenylation (APA) producing mRNAs with variable 3'-end formation. The CFIm complex acts as a key regulator of cleavage and polyadenylation site choice during APA through its binding to 5'-UGUA-3' elements localized in the 3'-untranslated region (UTR) for a huge number of pre-mRNAs. NUDT21/CPSF5 activates indirectly the mRNA 3'-processing machinery by recruiting CPSF6 and/or CPSF7. Binds to 5'-UGUA-3' elements localized upstream of pA signals that act as enhancers of pre-mRNA 3'-end processing. The homodimer mediates simultaneous sequence-specific recognition of two 5'-UGUA-3' elements within the pre-mRNA. Plays a role in somatic cell fate transitions and pluripotency by regulating widespread changes in gene expression through an APA-dependent function. Binds to chromatin. Binds to, but does not hydrolyze mono- and di-adenosine nucleotides. This is Cleavage and polyadenylation specificity factor subunit 5 from Mus musculus (Mouse).